The primary structure comprises 401 residues: Sorting nexin-4 (401 aa).

Residues Phe17–Asn139 form the PX domain. A 1,2-diacyl-sn-glycero-3-phospho-(1D-myo-inositol-3-phosphate) contacts are provided by Arg60, Ser62, Lys86, and Arg105. The residue at position 62 (Ser62) is a Phosphoserine. A coiled-coil region spans residues Ile190–Ala292.

The protein belongs to the sorting nexin family.

It is found in the cytoplasm. The protein resides in the cytosol. The protein localises to the preautophagosomal structure membrane. It localises to the endosome membrane. Its function is as follows. Sorting nexin, involved in the separation or division of vacuoles throughout the entire life cycle of the cells. Involved in retrieval of late-Golgi SNAREs from post-Golgi endosomes to the trans-Golgi network, for cytoplasm to vacuole transport (Cvt), and autophagy of large cargos including mitophagy, pexophagy and glycophagy. This is Sorting nexin-4 (snx4) from Schizosaccharomyces pombe (strain 972 / ATCC 24843) (Fission yeast).